Consider the following 545-residue polypeptide: Carboxylesterase 5A (545 aa).

The first 28 residues, 1–28 (MSGMWVHPGRTLIWALWVLAAVIKGPAA), serve as a signal peptide directing secretion. N-linked (GlcNAc...) (complex) asparagine glycosylation is present at Asn86. A disulfide bridge links Cys94 with Cys121. A glycan (N-linked (GlcNAc...) asparagine) is linked at Asn134. The active-site Acyl-ester intermediate is the Ser226. A disulfide bridge links Cys281 with Cys292. The active-site Charge relay system is Glu346. N-linked (GlcNAc...) asparagine glycans are attached at residues Asn363 and Asn443. Catalysis depends on His454, which acts as the Charge relay system.

It belongs to the type-B carboxylesterase/lipase family. Post-translationally, N-glycosylated; contains a fucosylated complex carbohydrate. In terms of tissue distribution, present at high level in urine. Expressed in the kidney proximal straight tubular cells and is secreted from the apical compartment of the cells into the urine (at protein level). In mature cats, it is present at higher level in intact males than in castrated males or in intact or spayed females.

It is found in the secreted. It catalyses the reaction a carboxylic ester + H2O = an alcohol + a carboxylate + H(+). In terms of biological role, carboxylesterase present at high level in urine that regulates production of felinine, a probable pheromone precursor. Probably acts by hydrolyzing the peptide bond of the felinine precursor 3-methylbutanol cyteinylglycine, producing felinine and glycine in cat urine. This Felis catus (Cat) protein is Carboxylesterase 5A (CES5A).